The sequence spans 388 residues: Endoglucanase 3 (388 aa).

Residues 1–16 (MKHSVLAGLFATGALA) form the signal peptide. The region spanning 17–52 (QGGAWQQCGGVGFSGSTSCVSGYTCVYLNDWYSQCQ) is the CBM1 domain. Disulfide bonds link C24-C41 and C35-C51. A linker region spans residues 53–91 (PQPTTLRTTTTPGATSTTRSAPAATSTTPAKGKFKWFGI). Positions 56-81 (TTLRTTTTPGATSTTRSAPAATSTTP) are disordered. Residues N92 and N155 are each glycosylated (N-linked (GlcNAc...) asparagine). Residues 92–388 (NQSCAEFGKG…YNSLLKKYVP (297 aa)) are catalytic. E215 acts as the Proton donor in catalysis. N259 carries N-linked (GlcNAc...) asparagine glycosylation. The active-site Nucleophile is E322.

It belongs to the glycosyl hydrolase 5 (cellulase A) family.

It carries out the reaction Endohydrolysis of (1-&gt;4)-beta-D-glucosidic linkages in cellulose, lichenin and cereal beta-D-glucans.. The chain is Endoglucanase 3 (CMC3) from Humicola insolens (Soft-rot fungus).